Reading from the N-terminus, the 62-residue chain is DNA-directed RNA polymerase subunit Rpo10 (62 aa).

Zn(2+) is bound by residues Cys6, Cys9, Cys43, and Cys44.

This sequence belongs to the archaeal Rpo10/eukaryotic RPB10 RNA polymerase subunit family. Part of the RNA polymerase complex. Zn(2+) is required as a cofactor.

It localises to the cytoplasm. It carries out the reaction RNA(n) + a ribonucleoside 5'-triphosphate = RNA(n+1) + diphosphate. DNA-dependent RNA polymerase (RNAP) catalyzes the transcription of DNA into RNA using the four ribonucleoside triphosphates as substrates. In Methanosarcina acetivorans (strain ATCC 35395 / DSM 2834 / JCM 12185 / C2A), this protein is DNA-directed RNA polymerase subunit Rpo10.